A 163-amino-acid polypeptide reads, in one-letter code: Cyanate hydratase (163 aa).

Catalysis depends on residues R103, E106, and S129.

This sequence belongs to the cyanase family.

It carries out the reaction cyanate + hydrogencarbonate + 3 H(+) = NH4(+) + 2 CO2. In terms of biological role, catalyzes the reaction of cyanate with bicarbonate to produce ammonia and carbon dioxide. The polypeptide is Cyanate hydratase (Paracoccidioides lutzii (strain ATCC MYA-826 / Pb01) (Paracoccidioides brasiliensis)).